A 344-amino-acid chain; its full sequence is Heat-inducible transcription repressor HrcA (344 aa).

Belongs to the HrcA family.

Its function is as follows. Negative regulator of class I heat shock genes (grpE-dnaK-dnaJ and groELS operons). Prevents heat-shock induction of these operons. In Streptococcus equi subsp. zooepidemicus (strain MGCS10565), this protein is Heat-inducible transcription repressor HrcA.